The primary structure comprises 312 residues: MINREDLLKNPVEDITLSDLKKYNDIVSVFDKIYGFSSEGIVNGSKILKEMIKNADLRFLSFTANLVSTGLRGLFADLIKKGYFNIVVTTGGTIDHDLARSFGGVYYKGSFDIDDTMLKDLEIHRLGNVLVPFESYGKVIEDVVRKFLPEITKDRKEISAYELLWEFGKRITDSNSILRAAYDKNVPIIVPGILDGSFGTNLFIQSQFLNFRINLFEDMRLIKDLIFSSKKSGALIIGGGISKHHTIWWNQFKDGLNYAIYITTAQEYDGSLSGAKPREAISWNKIRPDAKHVTIYGDATIIVPILAASLLS.

K285 functions as the Nucleophile in the catalytic mechanism.

It belongs to the deoxyhypusine synthase family. NAD(+) serves as cofactor.

It catalyses the reaction [eIF5A protein]-L-lysine + spermidine = [eIF5A protein]-deoxyhypusine + propane-1,3-diamine. The protein operates within protein modification; eIF5A hypusination. Catalyzes the NAD-dependent oxidative cleavage of spermidine and the subsequent transfer of the butylamine moiety of spermidine to the epsilon-amino group of a specific lysine residue of the eIF-5A precursor protein to form the intermediate deoxyhypusine residue. The protein is Probable deoxyhypusine synthase (dys) of Saccharolobus solfataricus (strain ATCC 35092 / DSM 1617 / JCM 11322 / P2) (Sulfolobus solfataricus).